The following is a 98-amino-acid chain: Large ribosomal subunit protein uL23 (98 aa).

It belongs to the universal ribosomal protein uL23 family. In terms of assembly, part of the 50S ribosomal subunit. Contacts protein L29, and trigger factor when it is bound to the ribosome.

Functionally, one of the early assembly proteins it binds 23S rRNA. One of the proteins that surrounds the polypeptide exit tunnel on the outside of the ribosome. Forms the main docking site for trigger factor binding to the ribosome. The polypeptide is Large ribosomal subunit protein uL23 (Sorangium cellulosum (strain So ce56) (Polyangium cellulosum (strain So ce56))).